A 1027-amino-acid polypeptide reads, in one-letter code: Sodium/potassium-transporting ATPase subunit alpha-1 (1027 aa).

A propeptide spanning residues 1-5 (MGVGD) is cleaved from the precursor. Positions 1–10 (MGVGDGRDQY) are enriched in basic and acidic residues. Residues 1-39 (MGVGDGRDQYELAAMSEQSGKKKSKNKKEKKEKDMDELK) form a disordered region. Residues 6 to 90 (GRDQYELAAM…NALTPPPTTP (85 aa)) lie on the Cytoplasmic side of the membrane. Phosphoserine; by PKC is present on Ser-16. Residues 29–39 (EKKEKDMDELK) show a composition bias toward basic and acidic residues. The tract at residues 85-87 (PPP) is interaction with phosphoinositide-3 kinase. The chain crosses the membrane as a helical span at residues 91–111 (EWVKFCKQMFGGFSMLLWTGA). Residues 112-134 (VLCFLAYGILAAMEDEPANDNLY) lie on the Extracellular side of the membrane. The helical transmembrane segment at 135-155 (LGVVLSAVVIITGCFSYYQDA) threads the bilayer. The Cytoplasmic portion of the chain corresponds to 156–291 (KSSKIMDSFK…VGRTPISIEI (136 aa)). The tract at residues 217–238 (DNSSLTGESEPQTRSPDFSNDN) is disordered. A helical transmembrane segment spans residues 292 to 311 (EHFIHIITGVAVFLGVSFLL). Residues 312 to 323 (LSLVLGYSWLEA) lie on the Extracellular side of the membrane. A helical membrane pass occupies residues 324–341 (VIFLIGIIVANVPEGLLA). Residues 342–776 (TVTVCLTLTA…EEGRLIFDNL (435 aa)) lie on the Cytoplasmic side of the membrane. The 4-aspartylphosphate intermediate role is filled by Asp-379. Lys-490 lines the ATP pocket. Positions 721 and 725 each coordinate Mg(2+). Residues 777-796 (KKSIAYTLTSNIPEITPFLF) traverse the membrane as a helical segment. Over 797–806 (FIIANIPLPL) the chain is Extracellular. A helical transmembrane segment spans residues 807–827 (GTVTILCIDLGTDMLPAISLA). The Cytoplasmic portion of the chain corresponds to 828–847 (YEAAESDIMKRQPRNPKTDK). Residues 848 to 870 (LVNERLISIAYGQIGMIQALAGF) traverse the membrane as a helical segment. Topologically, residues 871-922 (FTYFVILAENGFLPPRLLGIRMNWDDKYINDLEDSYGQQWTYEQRKIVEFTC) are extracellular. Residues 923 to 942 (HTAFFTSIVIVQWADLIICK) form a helical membrane-spanning segment. Over 943 to 955 (TRRNSVFQQGMKN) the chain is Cytoplasmic. Residue Ser-947 is modified to Phosphoserine; by PKA. The helical transmembrane segment at 956–974 (KILIFGLFEETALAAFLSY) threads the bilayer. At 975–989 (CPGMDVALRMYPLKP) the chain is on the extracellular side. A helical transmembrane segment spans residues 990–1010 (NWWFCAFPYSLLIFIYDEIRK). The Cytoplasmic segment spans residues 1011 to 1027 (LILRRNPGGWMERETYY).

This sequence belongs to the cation transport ATPase (P-type) (TC 3.A.3) family. Type IIC subfamily. In terms of assembly, the sodium/potassium-transporting ATPase is composed of a catalytic alpha subunit, an auxiliary non-catalytic beta subunit and an additional regulatory subunit.

It localises to the cell membrane. The protein localises to the sarcolemma. The catalysed reaction is K(+)(out) + Na(+)(in) + ATP + H2O = K(+)(in) + Na(+)(out) + ADP + phosphate + H(+). This is the catalytic component of the active enzyme, which catalyzes the hydrolysis of ATP coupled with the exchange of sodium and potassium ions across the plasma membrane. This action creates the electrochemical gradient of sodium and potassium ions, providing the energy for active transport of various nutrients. This Catostomus commersonii (White sucker) protein is Sodium/potassium-transporting ATPase subunit alpha-1 (atp1a1).